The chain runs to 174 residues: Inosine/xanthosine triphosphatase (174 aa).

Asp68 is a Mg(2+) binding site. 68-69 (DA) is a substrate binding site.

It belongs to the YjjX NTPase family. As to quaternary structure, homodimer. It depends on Mg(2+) as a cofactor. The cofactor is Mn(2+).

The catalysed reaction is XTP + H2O = XDP + phosphate + H(+). The enzyme catalyses ITP + H2O = IDP + phosphate + H(+). Phosphatase that hydrolyzes non-canonical purine nucleotides such as XTP and ITP to their respective diphosphate derivatives. Probably excludes non-canonical purines from DNA/RNA precursor pool, thus preventing their incorporation into DNA/RNA and avoiding chromosomal lesions. This is Inosine/xanthosine triphosphatase from Photobacterium profundum (strain SS9).